Reading from the N-terminus, the 207-residue chain is Cytochrome c oxidase subunit 3 (207 aa).

Transmembrane regions (helical) follow at residues F28–T48, V70–Y90, L102–F122, L144–I164, and W186–V206.

It belongs to the cytochrome c oxidase subunit 3 family.

Its subcellular location is the cell membrane. The catalysed reaction is 4 Fe(II)-[cytochrome c] + O2 + 8 H(+)(in) = 4 Fe(III)-[cytochrome c] + 2 H2O + 4 H(+)(out). The sequence is that of Cytochrome c oxidase subunit 3 (ctaE) from Bacillus sp. (strain PS3).